Consider the following 765-residue polypeptide: Probable dehydratase PflD (765 aa).

The 635-residue stretch at 3–637 (NRISRLKTAL…VVGATPDGRF (635 aa)) folds into the PFL domain. Residues 645 to 765 (GGLSPMLGQD…DIIRRTAHQL (121 aa)) enclose the Glycine radical domain. A Glycine radical modification is found at G741.

The protein belongs to the glycyl radical enzyme (GRE) family.

Its function is as follows. Probably shows dehydratase activity. The chain is Probable dehydratase PflD (pflD) from Escherichia coli (strain K12).